A 566-amino-acid polypeptide reads, in one-letter code: Serine/threonine-protein kinase PknE (566 aa).

Topologically, residues 1–337 (MDGTAESREG…PLPRSARQPW (337 aa)) are cytoplasmic. A Phosphoserine; by autocatalysis modification is found at Ser-7. Residue Thr-11 is modified to Phosphothreonine; by autocatalysis. One can recognise a Protein kinase domain in the interval 16–275 (YRLRRLVGRG…DLSAAAHAAL (260 aa)). ATP is bound by residues 22 to 30 (VGRGGMGDV) and Lys-45. Residues Thr-50 and Thr-59 each carry the phosphothreonine; by autocatalysis modification. Asp-139 acts as the Proton acceptor in catalysis. A phosphothreonine; by autocatalysis mark is found at Thr-170, Thr-175, and Thr-178. Residues 296–330 (PVPSTHPVSPGTRWPQPTPWAGGAPPWGPPSSPLP) are disordered. Residues 338–358 (LWVGVAVAVVVALAGGLGIAL) form a helical membrane-spanning segment. Over 359 to 566 (AHPWRSSGPR…DPSWLARLIG (208 aa)) the chain is Extracellular.

It belongs to the protein kinase superfamily. Ser/Thr protein kinase family. Post-translationally, autophosphorylated on serine and threonine residues. Dephosphorylated by PstP.

Its subcellular location is the cell membrane. It catalyses the reaction L-seryl-[protein] + ATP = O-phospho-L-seryl-[protein] + ADP + H(+). It carries out the reaction L-threonyl-[protein] + ATP = O-phospho-L-threonyl-[protein] + ADP + H(+). The chain is Serine/threonine-protein kinase PknE (pknE) from Mycobacterium bovis (strain ATCC BAA-935 / AF2122/97).